The chain runs to 429 residues: Enolase (429 aa).

Gln-168 is a (2R)-2-phosphoglycerate binding site. The active-site Proton donor is the Glu-210. Positions 247, 288, and 315 each coordinate Mg(2+). Residues Lys-340, Arg-369, Ser-370, and Lys-391 each coordinate (2R)-2-phosphoglycerate. Residue Lys-340 is the Proton acceptor of the active site.

It belongs to the enolase family. Mg(2+) serves as cofactor.

It is found in the cytoplasm. Its subcellular location is the secreted. The protein localises to the cell surface. It catalyses the reaction (2R)-2-phosphoglycerate = phosphoenolpyruvate + H2O. It participates in carbohydrate degradation; glycolysis; pyruvate from D-glyceraldehyde 3-phosphate: step 4/5. Catalyzes the reversible conversion of 2-phosphoglycerate (2-PG) into phosphoenolpyruvate (PEP). It is essential for the degradation of carbohydrates via glycolysis. The sequence is that of Enolase from Nostoc sp. (strain PCC 7120 / SAG 25.82 / UTEX 2576).